The sequence spans 369 residues: 4-hydroxyproline betaine 2-epimerase (369 aa).

Substrate-binding residues include Tyr56 and Gln162. Catalysis depends on Lys164, which acts as the Proton donor/acceptor. Mg(2+) is bound by residues Asp194, Glu219, and Asp242. The active-site Proton donor/acceptor is the Lys266. Ala295 contacts substrate.

The protein belongs to the mandelate racemase/muconate lactonizing enzyme family. Requires Mg(2+) as cofactor.

It carries out the reaction trans-4-hydroxy-L-proline betaine = cis-4-hydroxy-D-proline betaine. The catalysed reaction is L-proline betaine = D-proline betaine. Its function is as follows. Catalyzes the 2-epimerization of trans-4-hydroxy-L-proline betaine (tHyp-B) to cis-4-hydroxy-D-proline betaine (cHyp-B). Is involved in a catabolic pathway that degrades tHyp-B to alpha-ketoglutarate. This pathway would permit the utilization of tHyp-B as a carbon and nitrogen source in the absence of osmotic stress, since tHyp-B functions as an osmolyte and is not catabolized when it is needed as osmoprotectant. Can also catalyze the racemization of L-proline betaine. The polypeptide is 4-hydroxyproline betaine 2-epimerase (hpbD) (Paracoccus denitrificans (strain Pd 1222)).